An 86-amino-acid polypeptide reads, in one-letter code: MNLSHKTMFMTLYIVFLLIFGSYNATARIGPIKLSETEIVQTRSRQEIIGGFTFKGRVFHSFSKRVLVPPSGPSMRHNSVVNNLKH.

The first 27 residues, 1–27 (MNLSHKTMFMTLYIVFLLIFGSYNATA), serve as a signal peptide directing secretion.

Expressed in roots.

The protein resides in the secreted. The protein localises to the extracellular space. Functionally, involved in an ethylene-independent separation step of floral abscission. May act with RLK5 and HSL2 as ligand-receptor pairs. This Arabidopsis thaliana (Mouse-ear cress) protein is Protein IDA-LIKE 1 (IDL1).